The following is a 257-amino-acid chain: Acetylglutamate kinase (257 aa).

Substrate-binding positions include 41–42, Arg63, and Asn158; that span reads GG.

The protein belongs to the acetylglutamate kinase family. ArgB subfamily.

Its subcellular location is the cytoplasm. It catalyses the reaction N-acetyl-L-glutamate + ATP = N-acetyl-L-glutamyl 5-phosphate + ADP. Its pathway is amino-acid biosynthesis; L-arginine biosynthesis; N(2)-acetyl-L-ornithine from L-glutamate: step 2/4. Functionally, catalyzes the ATP-dependent phosphorylation of N-acetyl-L-glutamate. This chain is Acetylglutamate kinase, found in Phocaeicola vulgatus (strain ATCC 8482 / DSM 1447 / JCM 5826 / CCUG 4940 / NBRC 14291 / NCTC 11154) (Bacteroides vulgatus).